Reading from the N-terminus, the 271-residue chain is Pyrroline-5-carboxylate reductase (271 aa).

This sequence belongs to the pyrroline-5-carboxylate reductase family.

Its subcellular location is the cytoplasm. The enzyme catalyses L-proline + NADP(+) = (S)-1-pyrroline-5-carboxylate + NADPH + 2 H(+). The catalysed reaction is L-proline + NAD(+) = (S)-1-pyrroline-5-carboxylate + NADH + 2 H(+). It functions in the pathway amino-acid biosynthesis; L-proline biosynthesis; L-proline from L-glutamate 5-semialdehyde: step 1/1. Functionally, catalyzes the reduction of 1-pyrroline-5-carboxylate (PCA) to L-proline. The protein is Pyrroline-5-carboxylate reductase of Staphylococcus aureus (strain Mu50 / ATCC 700699).